The sequence spans 65 residues: Large ribosomal subunit protein bL35 (65 aa).

This sequence belongs to the bacterial ribosomal protein bL35 family.

In Thermotoga petrophila (strain ATCC BAA-488 / DSM 13995 / JCM 10881 / RKU-1), this protein is Large ribosomal subunit protein bL35.